The primary structure comprises 273 residues: Cell division protein FtsQ (273 aa).

The Cytoplasmic segment spans residues Met1 to Arg20. Residues Arg21 to Trp43 form a helical membrane-spanning segment. Residues Leu44 to Glu273 are Periplasmic-facing. A POTRA domain is found at Val47–Arg115.

Belongs to the FtsQ/DivIB family. FtsQ subfamily.

It is found in the cell inner membrane. In terms of biological role, essential cell division protein. The sequence is that of Cell division protein FtsQ from Rhodothermus marinus (strain ATCC 43812 / DSM 4252 / R-10) (Rhodothermus obamensis).